Consider the following 236-residue polypeptide: Transcriptional activator protein SolR (236 aa).

The 66-residue stretch at 169 to 234 folds into the HTH luxR-type domain; it reads VPESSAALTA…QAVVKAIAIG (66 aa). The segment at residues 193 to 212 is a DNA-binding region (H-T-H motif); it reads AYEIGQILRISERTVNFHVN.

The protein belongs to the autoinducer-regulated transcriptional regulatory protein family.

This is Transcriptional activator protein SolR (solR) from Ralstonia nicotianae (strain ATCC BAA-1114 / GMI1000) (Ralstonia solanacearum).